The following is a 752-amino-acid chain: Polyribonucleotide nucleotidyltransferase (752 aa).

Mg(2+)-binding residues include D519 and D525. The region spanning 585–644 is the KH domain; sequence PRVIAVKIPVDKIGEVIGPKGKMINQIQEDTGADISIEDDGTVYIGATNGPSADAARSAI. The S1 motif domain maps to 656-728; the sequence is GERYLGTVVK…DRGKLSLSPV (73 aa). The segment at 727-752 is disordered; it reads PVVAEEEGAEGAERAHATEPAEGAEI.

The protein belongs to the polyribonucleotide nucleotidyltransferase family. Mg(2+) is required as a cofactor.

It is found in the cytoplasm. The catalysed reaction is RNA(n+1) + phosphate = RNA(n) + a ribonucleoside 5'-diphosphate. In terms of biological role, involved in mRNA degradation. Catalyzes the phosphorolysis of single-stranded polyribonucleotides processively in the 3'- to 5'-direction. This chain is Polyribonucleotide nucleotidyltransferase, found in Pseudarthrobacter chlorophenolicus (strain ATCC 700700 / DSM 12829 / CIP 107037 / JCM 12360 / KCTC 9906 / NCIMB 13794 / A6) (Arthrobacter chlorophenolicus).